We begin with the raw amino-acid sequence, 355 residues long: Protein DVR-1 (355 aa).

The signal sequence occupies residues 1–15 (MFLVLLRACLLTLSL). Residues 16–240 (CSPAEDDGLV…PLQCRSRRKR (225 aa)) constitute a propeptide that is removed on maturation. Residues Asn108, Asn179, and Asn296 are each glycosylated (N-linked (GlcNAc...) asparagine). Intrachain disulfides connect Cys254–Cys320, Cys283–Cys352, and Cys287–Cys354.

Belongs to the TGF-beta family. Homodimer. In terms of tissue distribution, abundant in ovaries and eggs, and equally distributed among all blastomeres.

It is found in the secreted. Its function is as follows. Serves to facilitate the differentiation of either mesoderm or endoderm either as a cofactor in an instructive signal or by providing permissive environment. The chain is Protein DVR-1 (dvr1) from Danio rerio (Zebrafish).